A 389-amino-acid polypeptide reads, in one-letter code: NAD-dependent protein deacetylase sirtuin-2 (389 aa).

The segment at 1 to 34 (MAEPDPSHPLETQAGKVQEAQDSDSDSEGGAAGG) is disordered. A2 carries the post-translational modification N-acetylalanine. S23, S25, and S27 each carry phosphoserine. Residues 41–51 (LRNLFSQTLSL) carry the Nuclear export signal motif. Residue S53 is modified to Phosphoserine. Positions 57–338 (RLLDELTLEG…LALAELLGWK (282 aa)) constitute a Deacetylase sirtuin-type domain. NAD(+) contacts are provided by residues 85 to 89 (AGIST) and 95 to 97 (DFR). Phosphoserine is present on S100. Position 167–170 (167–170 (QNID)) interacts with NAD(+). The active-site Proton acceptor is H187. C195 and C200 together coordinate Zn(2+). S207 is modified (phosphoserine). Residues C221 and C224 each contribute to the Zn(2+) site. Residues 262-263 (TS), 286-288 (NKE), and C324 contribute to the NAD(+) site. Positions 351 to 389 (SIDAQSGAGVPNPSTSASPKKSPPPAKDEARTTEREKPQ) are disordered. Residues 361 to 370 (PNPSTSASPK) show a composition bias toward low complexity. S368 carries the phosphoserine; by CDK2 and CDK5 modification. Position 372 is a phosphoserine (S372). Residues 376–389 (AKDEARTTEREKPQ) are compositionally biased toward basic and acidic residues.

Belongs to the sirtuin family. Class I subfamily. As to quaternary structure, interacts with CDC20, FOXO3 and FZR1. Associates with microtubules in primary cortical mature neurons. Homotrimer. Isoform 1 and isoform 2 interact (via both phosphorylated, unphosphorylated, active or inactive forms) with HDAC6; the interaction is necessary for the complex to interact with alpha-tubulin, suggesting that these proteins belong to a large complex that deacetylates the cytoskeleton. Interacts with FOXO1; the interaction is disrupted upon serum-starvation or oxidative stress, leading to increased level of acetylated FOXO1 and induction of autophagy. Interacts with RELA; the interaction occurs in the cytoplasm and is increased in a TNF-alpha-dependent manner. Interacts with HOXA10; the interaction is direct. Interacts with YWHAB and YWHAG; the interactions occur in a AKT-dependent manner and increase SIRT2-dependent TP53 deacetylation. Interacts with MAPK1/ERK2 and MAPK3/ERK1; the interactions increase SIRT2 stability and deacetylation activity. Interacts (phosphorylated form) with KMT5A isoform 2; the interaction is direct, stimulates KMT5A-mediated methyltransferase activity on histone at 'Lys-20' (H4K20me1) and is increased in a H(2)O(2)-induced oxidative stress-dependent manner. Interacts with G6PD; the interaction is enhanced by H(2)O(2) treatment. Interacts with a G1/S-specific cyclin E-CDK2 complex. Interacts with AURKA, CDK5R1 (p35 form) and CDK5 and HIF1A. Isoform 1, isoform 2 and isoform 5 interact (via C-terminus region) with EP300. Interacts with the tRNA ligase SARS1; recruited to the VEGFA promoter via interaction with SARS1. Interacts with BEX4; negatively regulates alpha-tubulin deacetylation by SIRT2. Requires Zn(2+) as cofactor. In terms of processing, phosphorylated at phosphoserine and phosphothreonine. Phosphorylated at Ser-368 by a mitotic kinase CDK1/cyclin B at the G2/M transition; phosphorylation regulates the delay in cell-cycle progression. Phosphorylated at Ser-368 by a mitotic kinase G1/S-specific cyclin E/Cdk2 complex; phosphorylation inactivates SIRT2-mediated alpha-tubulin deacetylation and thereby negatively regulates cell adhesion, cell migration and neurite outgrowth during neuronal differentiation. Phosphorylated by cyclin A/Cdk2 and p35-Cdk5 complexes and to a lesser extent by the cyclin D3/Cdk4 and cyclin B/Cdk1, in vitro. Dephosphorylated at Ser-368 by CDC14A and CDC14B around early anaphase. Acetylated by EP300; acetylation leads both to the decreased of SIRT2-mediated alpha-tubulin deacetylase activity and SIRT2-mediated down-regulation of TP53 transcriptional activity. Post-translationally, ubiquitinated. Isoform 1 is expressed in heart, liver and skeletal muscle, weakly expressed in the cortex. Isoform 2 is strongly expressed in the cortex, weakly expressed in heart and liver. Weakly expressed in several malignancies including breast, liver, brain, kidney and prostate cancers compared to normal tissues. Weakly expressed in glioma cell lines compared to normal brain tissues (at protein level). Widely expressed. Highly expressed in heart, brain and skeletal muscle, while it is weakly expressed in placenta and lung. Down-regulated in many gliomas suggesting that it may act as a tumor suppressor gene in human gliomas possibly through the regulation of microtubule network.

It is found in the nucleus. The protein resides in the cytoplasm. It localises to the perinuclear region. Its subcellular location is the cytoskeleton. The protein localises to the microtubule organizing center. It is found in the centrosome. The protein resides in the centriole. It localises to the spindle. Its subcellular location is the midbody. The protein localises to the chromosome. It is found in the perikaryon. The protein resides in the cell projection. It localises to the growth cone. Its subcellular location is the myelin membrane. It carries out the reaction N(6)-acetyl-L-lysyl-[protein] + NAD(+) + H2O = 2''-O-acetyl-ADP-D-ribose + nicotinamide + L-lysyl-[protein]. It catalyses the reaction N(6)-tetradecanoyl-L-lysyl-[protein] + NAD(+) + H2O = 2''-O-tetradecanoyl-ADP-D-ribose + nicotinamide + L-lysyl-[protein]. The catalysed reaction is N(6)-hexadecanoyl-L-lysyl-[protein] + NAD(+) + H2O = 2''-O-hexadecanoyl-ADP-D-ribose + nicotinamide + L-lysyl-[protein]. Inhibited by Sirtinol, A3 and M15 small molecules. Inhibited by nicotinamide. Inhibited by a macrocyclic peptide inhibitor S2iL5. Inhibited by EP300-induced acetylation. In terms of biological role, NAD-dependent protein deacetylase, which deacetylates internal lysines on histone and alpha-tubulin as well as many other proteins such as key transcription factors. Participates in the modulation of multiple and diverse biological processes such as cell cycle control, genomic integrity, microtubule dynamics, cell differentiation, metabolic networks, and autophagy. Plays a major role in the control of cell cycle progression and genomic stability. Functions in the antephase checkpoint preventing precocious mitotic entry in response to microtubule stress agents, and hence allowing proper inheritance of chromosomes. Positively regulates the anaphase promoting complex/cyclosome (APC/C) ubiquitin ligase complex activity by deacetylating CDC20 and FZR1, then allowing progression through mitosis. Associates both with chromatin at transcriptional start sites (TSSs) and enhancers of active genes. Plays a role in cell cycle and chromatin compaction through epigenetic modulation of the regulation of histone H4 'Lys-20' methylation (H4K20me1) during early mitosis. Specifically deacetylates histone H4 at 'Lys-16' (H4K16ac) between the G2/M transition and metaphase enabling H4K20me1 deposition by KMT5A leading to ulterior levels of H4K20me2 and H4K20me3 deposition throughout cell cycle, and mitotic S-phase progression. Deacetylates KMT5A modulating KMT5A chromatin localization during the mitotic stress response. Also deacetylates histone H3 at 'Lys-57' (H3K56ac) during the mitotic G2/M transition. Upon bacterium Listeria monocytogenes infection, deacetylates 'Lys-18' of histone H3 in a receptor tyrosine kinase MET- and PI3K/Akt-dependent manner, thereby inhibiting transcriptional activity and promoting late stages of listeria infection. During oocyte meiosis progression, may deacetylate histone H4 at 'Lys-16' (H4K16ac) and alpha-tubulin, regulating spindle assembly and chromosome alignment by influencing microtubule dynamics and kinetochore function. Deacetylates histone H4 at 'Lys-16' (H4K16ac) at the VEGFA promoter and thereby contributes to regulate expression of VEGFA, a key regulator of angiogenesis. Deacetylates alpha-tubulin at 'Lys-40' and hence controls neuronal motility, oligodendroglial cell arbor projection processes and proliferation of non-neuronal cells. Phosphorylation at Ser-368 by a G1/S-specific cyclin E-CDK2 complex inactivates SIRT2-mediated alpha-tubulin deacetylation, negatively regulating cell adhesion, cell migration and neurite outgrowth during neuronal differentiation. Deacetylates PARD3 and participates in the regulation of Schwann cell peripheral myelination formation during early postnatal development and during postinjury remyelination. Involved in several cellular metabolic pathways. Plays a role in the regulation of blood glucose homeostasis by deacetylating and stabilizing phosphoenolpyruvate carboxykinase PCK1 activity in response to low nutrient availability. Acts as a key regulator in the pentose phosphate pathway (PPP) by deacetylating and activating the glucose-6-phosphate G6PD enzyme, and therefore, stimulates the production of cytosolic NADPH to counteract oxidative damage. Maintains energy homeostasis in response to nutrient deprivation as well as energy expenditure by inhibiting adipogenesis and promoting lipolysis. Attenuates adipocyte differentiation by deacetylating and promoting FOXO1 interaction to PPARG and subsequent repression of PPARG-dependent transcriptional activity. Plays a role in the regulation of lysosome-mediated degradation of protein aggregates by autophagy in neuronal cells. Deacetylates FOXO1 in response to oxidative stress or serum deprivation, thereby negatively regulating FOXO1-mediated autophagy. Deacetylates a broad range of transcription factors and co-regulators regulating target gene expression. Deacetylates transcriptional factor FOXO3 stimulating the ubiquitin ligase SCF(SKP2)-mediated FOXO3 ubiquitination and degradation. Deacetylates HIF1A and therefore promotes HIF1A degradation and inhibition of HIF1A transcriptional activity in tumor cells in response to hypoxia. Deacetylates RELA in the cytoplasm inhibiting NF-kappaB-dependent transcription activation upon TNF-alpha stimulation. Inhibits transcriptional activation by deacetylating p53/TP53 and EP300. Also deacetylates EIF5A. Functions as a negative regulator on oxidative stress-tolerance in response to anoxia-reoxygenation conditions. Plays a role as tumor suppressor. In addition to protein deacetylase activity, also has activity toward long-chain fatty acyl groups and mediates protein-lysine demyristoylation and depalmitoylation of target proteins, such as ARF6 and KRAS, thereby regulating their association with membranes. Its function is as follows. Deacetylates EP300, alpha-tubulin and histone H3 and H4. Functionally, lacks deacetylation activity, at least toward known SIRT2 targets. This Homo sapiens (Human) protein is NAD-dependent protein deacetylase sirtuin-2 (SIRT2).